Reading from the N-terminus, the 212-residue chain is ATP phosphoribosyltransferase (212 aa).

The protein belongs to the ATP phosphoribosyltransferase family. Short subfamily. Heteromultimer composed of HisG and HisZ subunits.

The protein resides in the cytoplasm. It catalyses the reaction 1-(5-phospho-beta-D-ribosyl)-ATP + diphosphate = 5-phospho-alpha-D-ribose 1-diphosphate + ATP. It participates in amino-acid biosynthesis; L-histidine biosynthesis; L-histidine from 5-phospho-alpha-D-ribose 1-diphosphate: step 1/9. Functionally, catalyzes the condensation of ATP and 5-phosphoribose 1-diphosphate to form N'-(5'-phosphoribosyl)-ATP (PR-ATP). Has a crucial role in the pathway because the rate of histidine biosynthesis seems to be controlled primarily by regulation of HisG enzymatic activity. The polypeptide is ATP phosphoribosyltransferase (Prochlorococcus marinus (strain AS9601)).